Here is a 1056-residue protein sequence, read N- to C-terminus: Isoleucine--tRNA ligase (1056 aa).

The short motif at 56 to 66 is the 'HIGH' region element; that stretch reads PFATGLPHYGH. The short motif at 603-607 is the 'KMSKS' region element; the sequence is KMSKS. Lys606 lines the ATP pocket.

Belongs to the class-I aminoacyl-tRNA synthetase family. IleS type 2 subfamily. As to quaternary structure, monomer. It depends on Zn(2+) as a cofactor.

It is found in the cytoplasm. It carries out the reaction tRNA(Ile) + L-isoleucine + ATP = L-isoleucyl-tRNA(Ile) + AMP + diphosphate. Catalyzes the attachment of isoleucine to tRNA(Ile). As IleRS can inadvertently accommodate and process structurally similar amino acids such as valine, to avoid such errors it has two additional distinct tRNA(Ile)-dependent editing activities. One activity is designated as 'pretransfer' editing and involves the hydrolysis of activated Val-AMP. The other activity is designated 'posttransfer' editing and involves deacylation of mischarged Val-tRNA(Ile). In Bdellovibrio bacteriovorus (strain ATCC 15356 / DSM 50701 / NCIMB 9529 / HD100), this protein is Isoleucine--tRNA ligase.